A 211-amino-acid chain; its full sequence is Thiamine-phosphate synthase (211 aa).

Residues 39–41 (QLR) and Asn71 contribute to the 4-amino-2-methyl-5-(diphosphooxymethyl)pyrimidine site. Residues Asp72 and Asp91 each contribute to the Mg(2+) site. Residue Ser110 participates in 4-amino-2-methyl-5-(diphosphooxymethyl)pyrimidine binding. Position 136 to 138 (136 to 138 (TGT)) interacts with 2-[(2R,5Z)-2-carboxy-4-methylthiazol-5(2H)-ylidene]ethyl phosphate. Lys139 provides a ligand contact to 4-amino-2-methyl-5-(diphosphooxymethyl)pyrimidine. 2-[(2R,5Z)-2-carboxy-4-methylthiazol-5(2H)-ylidene]ethyl phosphate is bound by residues Gly167 and 187-188 (VS).

This sequence belongs to the thiamine-phosphate synthase family. Mg(2+) serves as cofactor.

It carries out the reaction 2-[(2R,5Z)-2-carboxy-4-methylthiazol-5(2H)-ylidene]ethyl phosphate + 4-amino-2-methyl-5-(diphosphooxymethyl)pyrimidine + 2 H(+) = thiamine phosphate + CO2 + diphosphate. The enzyme catalyses 2-(2-carboxy-4-methylthiazol-5-yl)ethyl phosphate + 4-amino-2-methyl-5-(diphosphooxymethyl)pyrimidine + 2 H(+) = thiamine phosphate + CO2 + diphosphate. The catalysed reaction is 4-methyl-5-(2-phosphooxyethyl)-thiazole + 4-amino-2-methyl-5-(diphosphooxymethyl)pyrimidine + H(+) = thiamine phosphate + diphosphate. It functions in the pathway cofactor biosynthesis; thiamine diphosphate biosynthesis; thiamine phosphate from 4-amino-2-methyl-5-diphosphomethylpyrimidine and 4-methyl-5-(2-phosphoethyl)-thiazole: step 1/1. Functionally, condenses 4-methyl-5-(beta-hydroxyethyl)thiazole monophosphate (THZ-P) and 2-methyl-4-amino-5-hydroxymethyl pyrimidine pyrophosphate (HMP-PP) to form thiamine monophosphate (TMP). This chain is Thiamine-phosphate synthase, found in Xanthobacter autotrophicus (strain ATCC BAA-1158 / Py2).